The chain runs to 1779 residues: Fibronectin type III domain-containing protein 1 (1779 aa).

Residues 1–29 (MAPEARASPRLLLRAALLLLAALLPVASS) form the signal peptide. 4 Fibronectin type-III domains span residues 33 to 126 (PVDH…KAPR), 103 to 203 (PNKP…AEED), 207 to 302 (VPED…TPES), and 307 to 402 (APEN…IPTT). A compositionally biased stretch (polar residues) spans 400-413 (PTTSSTEASVQPNG). Disordered regions lie at residues 400–442 (PTTS…MPPA), 459–1108 (NGVA…RNLD), 1120–1227 (EENT…KPNG), and 1330–1401 (PTTT…PPGT). Low complexity predominate over residues 423–437 (QQPSSSAPKVAASSQ). Residues 493–506 (NPRSSRLETLNQKQ) show a composition bias toward polar residues. The segment covering 534–554 (SRKEGMDRRGPSLDPHPHPRV) has biased composition (basic and acidic residues). Composition is skewed to polar residues over residues 557 to 570 (SASS…STDN) and 590 to 607 (SSGS…TSAP). The span at 629-640 (ASSSTSRQSHSS) shows a compositional bias: low complexity. Phosphoserine is present on S651. Residues 676 to 694 (HASSSHTTSRTASSSHPSA) are compositionally biased toward low complexity. S699 carries the post-translational modification Phosphoserine. Residues 707 to 720 (DSDRAAEDTIRRAE) are compositionally biased toward basic and acidic residues. Polar residues-rich tracts occupy residues 763–784 (PSVS…SLPA) and 861–875 (PLSS…STTD). Positions 879–904 (PQTSPASTSRQPSPARPPASRSQPSP) are enriched in low complexity. Composition is skewed to polar residues over residues 957-971 (APQN…TYED) and 1003-1020 (VGSQ…SQAG). Low complexity predominate over residues 1085–1097 (LSTSVKKWPSSSS). A compositionally biased stretch (basic and acidic residues) spans 1098–1108 (PRDKYADRNLD). Composition is skewed to polar residues over residues 1147 to 1159 (NPAT…NTHS) and 1166 to 1177 (RAPSSYSSTTPM). Residues 1330–1389 (PTTTMPPSTTTTTVPPTTTLPPTTTTTRRTTTTRRTTTTRRPTTTTRATRRTTTTTTTPE) show a composition bias toward low complexity. The Fibronectin type-III 5 domain occupies 1543–1637 (APRNITVVAM…PSVSFVTESD (95 aa)). The N-linked (GlcNAc...) asparagine glycan is linked to N1546.

Its subcellular location is the secreted. Its function is as follows. May be an activator of G protein signaling. This Rattus norvegicus (Rat) protein is Fibronectin type III domain-containing protein 1 (Fndc1).